The primary structure comprises 333 residues: Homeobox protein engrailed-2 (333 aa).

Disordered stretches follow at residues 1 to 49, 95 to 206, and 223 to 250; these read MEEN…RALM, GRGG…GANL, and SDRP…PRTA. Composition is skewed to gly residues over residues 25–36 and 95–117; these read PGGGSGGGGGSS and GRGG…GAGG. Low complexity-rich tracts occupy residues 142–151 and 191–200; these read PLPAAGSDSP and LSVSSDSDSS. Residues 244–303 constitute a DNA-binding region (homeobox); the sequence is DKRPRTAFTAEQLQRLKAEFQTNRYLTEQRRQSLAQELSLNESQIKIWFQNKRAKIKKAT.

Belongs to the engrailed homeobox family.

It is found in the nucleus. This chain is Homeobox protein engrailed-2 (EN2), found in Homo sapiens (Human).